Here is a 68-residue protein sequence, read N- to C-terminus: Large ribosomal subunit protein uL29 (68 aa).

The protein belongs to the universal ribosomal protein uL29 family.

The polypeptide is Large ribosomal subunit protein uL29 (Chloroflexus aurantiacus (strain ATCC 29364 / DSM 637 / Y-400-fl)).